The following is a 309-amino-acid chain: Sulfate adenylyltransferase subunit 2 (309 aa).

It belongs to the PAPS reductase family. CysD subfamily. In terms of assembly, heterodimer composed of CysD, the smaller subunit, and CysN.

The enzyme catalyses sulfate + ATP + H(+) = adenosine 5'-phosphosulfate + diphosphate. It functions in the pathway sulfur metabolism; hydrogen sulfide biosynthesis; sulfite from sulfate: step 1/3. Its function is as follows. With CysN forms the ATP sulfurylase (ATPS) that catalyzes the adenylation of sulfate producing adenosine 5'-phosphosulfate (APS) and diphosphate, the first enzymatic step in sulfur assimilation pathway. APS synthesis involves the formation of a high-energy phosphoric-sulfuric acid anhydride bond driven by GTP hydrolysis by CysN coupled to ATP hydrolysis by CysD. This Mycobacterium sp. (strain JLS) protein is Sulfate adenylyltransferase subunit 2.